Consider the following 185-residue polypeptide: Ribose 1,5-bisphosphate phosphokinase PhnN (185 aa).

The protein belongs to the ribose 1,5-bisphosphokinase family.

The catalysed reaction is alpha-D-ribose 1,5-bisphosphate + ATP = 5-phospho-alpha-D-ribose 1-diphosphate + ADP. It functions in the pathway metabolic intermediate biosynthesis; 5-phospho-alpha-D-ribose 1-diphosphate biosynthesis; 5-phospho-alpha-D-ribose 1-diphosphate from D-ribose 5-phosphate (route II): step 3/3. Functionally, catalyzes the phosphorylation of ribose 1,5-bisphosphate to 5-phospho-D-ribosyl alpha-1-diphosphate (PRPP). The protein is Ribose 1,5-bisphosphate phosphokinase PhnN of Escherichia coli (strain SMS-3-5 / SECEC).